The following is a 398-amino-acid chain: MPHFLAKLDCKPLEYPIISGDFCFHKEFSSLKHPTKSCVYASFKDHIFLLQKIRRANDFLIKSEKATPLKREILKQALRIYAQSFEVILHNLQENSKHASGKKALDLEDFEDFIKENQAPILMEIGFGSGRHLMELAKNNPTKTCLGIEIYTPSIAQVLKQIELLDLKNLHVLQGDGRLVLESIPHHKCEKIFVHFPVPWNDKKHRRVLSERFLDEALRVLEPNGFLELRTDDTLYFEDSLKLALKHFKSEIEIKKNAQIPVVSKYEARWNKLKKDIYDLRIYSLESNETPFNNHAFDFSFDTITLNQKSVGMILKTPKIIKEGYFVHVCNIYENKGDFLVELSMGDFDWPMRLFVLSVKNQVFYLNKSPLKTLNNHKAHLLLQNILKEFDEYNHCSE.

The S-adenosyl-L-methionine site is built by Glu124, Glu149, and Asp176. Asp232 lines the substrate pocket.

It belongs to the class I-like SAM-binding methyltransferase superfamily. TrmB family.

It catalyses the reaction guanosine(46) in tRNA + S-adenosyl-L-methionine = N(7)-methylguanosine(46) in tRNA + S-adenosyl-L-homocysteine. Its pathway is tRNA modification; N(7)-methylguanine-tRNA biosynthesis. In terms of biological role, catalyzes the formation of N(7)-methylguanine at position 46 (m7G46) in tRNA. This chain is tRNA (guanine-N(7)-)-methyltransferase, found in Helicobacter acinonychis (strain Sheeba).